Here is a 214-residue protein sequence, read N- to C-terminus: Probable maleylacetoacetate isomerase (214 aa).

Residues 4 to 84 (QKPVLYSYWR…YLEETHPDVP (81 aa)) form the GST N-terminal domain. Residues 14 to 19 (SSCSWR), Val56, 68 to 69 (ES), Gln108, and 112 to 114 (NLK) each bind glutathione. A GST C-terminal domain is found at 89–212 (DPIKRAHARA…HPDNQPDTGL (124 aa)).

Belongs to the GST superfamily. Zeta family. Glutathione is required as a cofactor.

Its subcellular location is the cytoplasm. The enzyme catalyses 4-maleylacetoacetate = 4-fumarylacetoacetate. It participates in amino-acid degradation; L-phenylalanine degradation; acetoacetate and fumarate from L-phenylalanine: step 5/6. This Caenorhabditis elegans protein is Probable maleylacetoacetate isomerase (gst-42).